The primary structure comprises 910 residues: Valine--tRNA ligase (910 aa).

Residues 45–55 (PNVTGSLHMGH) carry the 'HIGH' region motif. The 'KMSKS' region motif lies at 554–558 (KMSKS). Position 557 (Lys557) interacts with ATP. Residues 842-910 (DLQAEAARLA…TAESRIRDAS (69 aa)) adopt a coiled-coil conformation.

The protein belongs to the class-I aminoacyl-tRNA synthetase family. ValS type 1 subfamily. Monomer.

The protein localises to the cytoplasm. The catalysed reaction is tRNA(Val) + L-valine + ATP = L-valyl-tRNA(Val) + AMP + diphosphate. In terms of biological role, catalyzes the attachment of valine to tRNA(Val). As ValRS can inadvertently accommodate and process structurally similar amino acids such as threonine, to avoid such errors, it has a 'posttransfer' editing activity that hydrolyzes mischarged Thr-tRNA(Val) in a tRNA-dependent manner. The polypeptide is Valine--tRNA ligase (Brucella melitensis biotype 1 (strain ATCC 23456 / CCUG 17765 / NCTC 10094 / 16M)).